The following is a 108-amino-acid chain: Abdominal ganglion neuropeptide R3-14 (108 aa).

An N-terminal signal peptide occupies residues 1-23 (MQVLHLCLAVSIAVALLSQAAWS). Residues glutamate 24 and glutamate 52 each carry the pyrrolidone carboxylic acid (Glu); partial modification. Position 66 is a pyrrolidone carboxylic acid (glutamine 66).

In terms of processing, the partial formation of pyroglutamate from N-terminal glutamic acid in peptides isolated from single cells is detected by mass spectrometry. There are indications this modification depends on a heat sensitive factor. As to expression, neurons R3-R14. A cluster of 12 giant neurons located on the right side of the abdominal ganglion.

It is found in the secreted. Its function is as follows. HRBP is a myoactive peptide that excites Aplysia heart and enhances gut motility in vitro. This Aplysia californica (California sea hare) protein is Abdominal ganglion neuropeptide R3-14.